The primary structure comprises 725 residues: 1,4-alpha-glucan branching enzyme GlgB (725 aa).

The active-site Nucleophile is the Asp-406. Glu-459 serves as the catalytic Proton donor.

The protein belongs to the glycosyl hydrolase 13 family. GlgB subfamily. As to quaternary structure, monomer.

It catalyses the reaction Transfers a segment of a (1-&gt;4)-alpha-D-glucan chain to a primary hydroxy group in a similar glucan chain.. The protein operates within glycan biosynthesis; glycogen biosynthesis. Catalyzes the formation of the alpha-1,6-glucosidic linkages in glycogen by scission of a 1,4-alpha-linked oligosaccharide from growing alpha-1,4-glucan chains and the subsequent attachment of the oligosaccharide to the alpha-1,6 position. In Methylobacillus flagellatus (strain ATCC 51484 / DSM 6875 / VKM B-1610 / KT), this protein is 1,4-alpha-glucan branching enzyme GlgB.